The chain runs to 231 residues: Ribonuclease 3 (231 aa).

The RNase III domain occupies 3–130 (MHEFFENFGI…VTAAIYLDQT (128 aa)). Residue E43 participates in Mg(2+) binding. The active site involves D47. Residues D116 and E119 each contribute to the Mg(2+) site. Residue E119 is part of the active site. The region spanning 157–228 (DYKSELQEII…AKDCLNKLKK (72 aa)) is the DRBM domain.

It belongs to the ribonuclease III family. In terms of assembly, homodimer. Requires Mg(2+) as cofactor.

Its subcellular location is the cytoplasm. It catalyses the reaction Endonucleolytic cleavage to 5'-phosphomonoester.. Its function is as follows. Digests double-stranded RNA. Involved in the processing of primary rRNA transcript to yield the immediate precursors to the large and small rRNAs (23S and 16S). Processes some mRNAs, and tRNAs when they are encoded in the rRNA operon. Processes pre-crRNA and tracrRNA of type II CRISPR loci if present in the organism. This Mesoplasma florum (strain ATCC 33453 / NBRC 100688 / NCTC 11704 / L1) (Acholeplasma florum) protein is Ribonuclease 3.